The primary structure comprises 236 residues: Small ribosomal subunit protein uS3 (236 aa).

Positions 39 to 107 constitute a KH type-2 domain; it reads IREILHKELK…DVVINIVEIR (69 aa). The disordered stretch occupies residues 213-236; that stretch reads MAQDKRMNEGGGESPSPRSRRDAA.

Belongs to the universal ribosomal protein uS3 family. As to quaternary structure, part of the 30S ribosomal subunit. Forms a tight complex with proteins S10 and S14.

Functionally, binds the lower part of the 30S subunit head. Binds mRNA in the 70S ribosome, positioning it for translation. This chain is Small ribosomal subunit protein uS3, found in Bradyrhizobium sp. (strain ORS 278).